A 77-amino-acid polypeptide reads, in one-letter code: Large ribosomal subunit protein eL20 (77 aa).

The protein belongs to the eukaryotic ribosomal protein eL20 family. As to quaternary structure, part of the 50S ribosomal subunit. Binds 23S rRNA.

This is Large ribosomal subunit protein eL20 from Thermococcus kodakarensis (strain ATCC BAA-918 / JCM 12380 / KOD1) (Pyrococcus kodakaraensis (strain KOD1)).